The following is a 363-amino-acid chain: NAD kinase 1 (363 aa).

Asp68 (proton acceptor) is an active-site residue. Residues 68 to 69 (DG), Arg73, 175 to 176 (ND), Arg186, Asp205, Ala240, and Gln275 contribute to the NAD(+) site.

This sequence belongs to the NAD kinase family. It depends on a divalent metal cation as a cofactor.

The protein resides in the cytoplasm. The catalysed reaction is NAD(+) + ATP = ADP + NADP(+) + H(+). Involved in the regulation of the intracellular balance of NAD and NADP, and is a key enzyme in the biosynthesis of NADP. Catalyzes specifically the phosphorylation on 2'-hydroxyl of the adenosine moiety of NAD to yield NADP. In Streptomyces coelicolor (strain ATCC BAA-471 / A3(2) / M145), this protein is NAD kinase 1.